We begin with the raw amino-acid sequence, 251 residues long: Glucosamine-6-phosphate deaminase (251 aa).

The active-site Proton acceptor; for enolization step is Asp67. Asn136 serves as the catalytic For ring-opening step. His138 (proton acceptor; for ring-opening step) is an active-site residue. Glu143 serves as the catalytic For ring-opening step.

The protein belongs to the glucosamine/galactosamine-6-phosphate isomerase family. NagB subfamily.

It carries out the reaction alpha-D-glucosamine 6-phosphate + H2O = beta-D-fructose 6-phosphate + NH4(+). It participates in amino-sugar metabolism; N-acetylneuraminate degradation; D-fructose 6-phosphate from N-acetylneuraminate: step 5/5. In terms of biological role, catalyzes the reversible isomerization-deamination of glucosamine 6-phosphate (GlcN6P) to form fructose 6-phosphate (Fru6P) and ammonium ion. In Geobacillus sp. (strain WCH70), this protein is Glucosamine-6-phosphate deaminase.